The following is a 272-amino-acid chain: 3-methyl-2-oxobutanoate hydroxymethyltransferase (272 aa).

Mg(2+) contacts are provided by D43 and D82. Residues 43-44 (DS), D82, and K112 contribute to the 3-methyl-2-oxobutanoate site. Mg(2+) is bound at residue E114. The Proton acceptor role is filled by E179.

It belongs to the PanB family. In terms of assembly, homodecamer; pentamer of dimers. Mg(2+) is required as a cofactor.

The protein resides in the cytoplasm. It catalyses the reaction 3-methyl-2-oxobutanoate + (6R)-5,10-methylene-5,6,7,8-tetrahydrofolate + H2O = 2-dehydropantoate + (6S)-5,6,7,8-tetrahydrofolate. It participates in cofactor biosynthesis; (R)-pantothenate biosynthesis; (R)-pantoate from 3-methyl-2-oxobutanoate: step 1/2. Its function is as follows. Catalyzes the reversible reaction in which hydroxymethyl group from 5,10-methylenetetrahydrofolate is transferred onto alpha-ketoisovalerate to form ketopantoate. The chain is 3-methyl-2-oxobutanoate hydroxymethyltransferase from Staphylococcus aureus (strain Mu3 / ATCC 700698).